The sequence spans 918 residues: Exostosin-like 3 (918 aa).

Residues 1–30 (MTGYTMLRNGGVGNGGQTCMLRWSNRIRLT) are Cytoplasmic-facing. The segment at 1-140 (MTGYTMLRNG…LKNVISQTEH (140 aa)) is required for interaction with REG3A. A helical; Signal-anchor for type II membrane protein transmembrane segment spans residues 31–51 (WLSFTLFIILVFFPLIAHYYL). The Lumenal portion of the chain corresponds to 52–918 (TTLDEADEAG…HDKTKCFKFI (867 aa)). 2 disulfides stabilise this stretch: Cys177/Cys182 and Cys188/Cys236. Residue Asn290 is glycosylated (N-linked (GlcNAc...) asparagine). A Phosphoserine modification is found at Ser361. Cys399 and Cys414 are oxidised to a cystine. A glycan (N-linked (GlcNAc...) asparagine) is linked at Asn591. UDP-N-acetyl-alpha-D-glucosamine is bound by residues Leu667, Arg671, Asn696, Asn722, Arg727, Asp743, Asp744, and Asp745. Asp745 contributes to the Mn(2+) binding site. N-linked (GlcNAc...) asparagine glycosylation occurs at Asn789. An intrachain disulfide couples Cys830 to Cys878. Residues Glu831, Asp832, and Arg875 each coordinate UDP-N-acetyl-alpha-D-glucosamine. Asp832 is a catalytic residue.

This sequence belongs to the glycosyltransferase 47 family. In terms of assembly, homodimer; disulfide-linked. Interacts with REG3A. It depends on Mn(2+) as a cofactor. As to expression, expressed in pancreatic islet beta-cells. Expressed in lung epithelial cells. Expressed in microglia.

The protein localises to the endoplasmic reticulum membrane. Its subcellular location is the golgi apparatus. The protein resides in the cell membrane. It is found in the nucleus. It carries out the reaction 3-O-(beta-D-GlcA-(1-&gt;3)-beta-D-Gal-(1-&gt;3)-beta-D-Gal-(1-&gt;4)-beta-D-Xyl)-L-seryl-[protein] + UDP-N-acetyl-alpha-D-glucosamine = 3-O-(alpha-D-GlcNAc-(1-&gt;4)-beta-D-GlcA-(1-&gt;3)-beta-D-Gal-(1-&gt;3)-beta-D-Gal-(1-&gt;4)-beta-D-Xyl)-L-seryl-[protein] + UDP + H(+). It functions in the pathway glycan metabolism; heparan sulfate biosynthesis. In terms of biological role, glycosyltransferase which regulates the biosynthesis of heparan sulfate (HS). Initiates HS synthesis by transferring the first N-acetyl-alpha-D-glucosamine (alpha-GlcNAc) residue (GlcNAcT-I activity) to the tetrasaccharide linker (GlcA-Gal-Gal-Xyl-)Ser core linker. May also transfer alpha-GlcNAc residues during HS elongation (GlcNAcT-II activity). Lacks glucuronyl transferase II (GlcAT-II) activity. Important for both skeletal development and hematopoiesis, through the formation of HS proteoglycans (HSPGs). Through the synthesis of HS, regulates postnatal pancreatic islet maturation and insulin secretion. Receptor for REG3A, REG3B and REG3G, induces the activation of downstream signaling pathways such as PI3K-AKT or RAS-RAF-MEK-ERK signaling pathway. Required for the function of REG3A in regulating keratinocyte proliferation and differentiation. Required for the inhibition of skin inflammation mediated by REG3A through the activation of PI3K-AKT-STAT3 pathway. Required for the function of REG3A and REG3G in glucose tolerance in pancreas. Expressed in microglia, is activated by nociceptor-derived REG3G in response to endotoxins, leading to the inhibition of kynurenine pathway to prevent endotoxic death. The sequence is that of Exostosin-like 3 from Mus musculus (Mouse).